The sequence spans 364 residues: tRNA/tmRNA (uracil-C(5))-methyltransferase (364 aa).

Positions 188, 216, 221, 237, and 297 each coordinate S-adenosyl-L-methionine. Residue Cys-322 is the Nucleophile of the active site. Catalysis depends on Glu-356, which acts as the Proton acceptor.

The protein belongs to the class I-like SAM-binding methyltransferase superfamily. RNA M5U methyltransferase family. TrmA subfamily.

The catalysed reaction is uridine(54) in tRNA + S-adenosyl-L-methionine = 5-methyluridine(54) in tRNA + S-adenosyl-L-homocysteine + H(+). It carries out the reaction uridine(341) in tmRNA + S-adenosyl-L-methionine = 5-methyluridine(341) in tmRNA + S-adenosyl-L-homocysteine + H(+). Functionally, dual-specificity methyltransferase that catalyzes the formation of 5-methyluridine at position 54 (m5U54) in all tRNAs, and that of position 341 (m5U341) in tmRNA (transfer-mRNA). In Mannheimia succiniciproducens (strain KCTC 0769BP / MBEL55E), this protein is tRNA/tmRNA (uracil-C(5))-methyltransferase.